The sequence spans 366 residues: Chorismate synthase (366 aa).

2 residues coordinate NADP(+): arginine 48 and arginine 54. Residues 125-127 (RSS), 238-239 (NA), glycine 278, 293-297 (KPTSS), and arginine 319 each bind FMN.

It belongs to the chorismate synthase family. In terms of assembly, homotetramer. The cofactor is FMNH2.

The catalysed reaction is 5-O-(1-carboxyvinyl)-3-phosphoshikimate = chorismate + phosphate. The protein operates within metabolic intermediate biosynthesis; chorismate biosynthesis; chorismate from D-erythrose 4-phosphate and phosphoenolpyruvate: step 7/7. Its function is as follows. Catalyzes the anti-1,4-elimination of the C-3 phosphate and the C-6 proR hydrogen from 5-enolpyruvylshikimate-3-phosphate (EPSP) to yield chorismate, which is the branch point compound that serves as the starting substrate for the three terminal pathways of aromatic amino acid biosynthesis. This reaction introduces a second double bond into the aromatic ring system. This is Chorismate synthase from Ralstonia pickettii (strain 12J).